Here is a 134-residue protein sequence, read N- to C-terminus: UPF0412 protein YaaI (134 aa).

Residues 1–23 (MKSVFTISASLAISLMLCCTAQA) form the signal peptide.

This sequence belongs to the UPF0412 family.

This is UPF0412 protein YaaI from Escherichia coli (strain ATCC 8739 / DSM 1576 / NBRC 3972 / NCIMB 8545 / WDCM 00012 / Crooks).